The chain runs to 391 residues: NADH-quinone oxidoreductase subunit D (391 aa).

Belongs to the complex I 49 kDa subunit family. NDH-1 is composed of 14 different subunits. Subunits NuoB, C, D, E, F, and G constitute the peripheral sector of the complex.

The protein localises to the cell inner membrane. It catalyses the reaction a quinone + NADH + 5 H(+)(in) = a quinol + NAD(+) + 4 H(+)(out). Functionally, NDH-1 shuttles electrons from NADH, via FMN and iron-sulfur (Fe-S) centers, to quinones in the respiratory chain. The immediate electron acceptor for the enzyme in this species is believed to be ubiquinone. Couples the redox reaction to proton translocation (for every two electrons transferred, four hydrogen ions are translocated across the cytoplasmic membrane), and thus conserves the redox energy in a proton gradient. The protein is NADH-quinone oxidoreductase subunit D of Rickettsia rickettsii (strain Iowa).